The sequence spans 76 residues: Small ribosomal subunit protein bS18 (76 aa).

This sequence belongs to the bacterial ribosomal protein bS18 family. In terms of assembly, part of the 30S ribosomal subunit. Forms a tight heterodimer with protein bS6.

Functionally, binds as a heterodimer with protein bS6 to the central domain of the 16S rRNA, where it helps stabilize the platform of the 30S subunit. The sequence is that of Small ribosomal subunit protein bS18 from Tolumonas auensis (strain DSM 9187 / NBRC 110442 / TA 4).